A 167-amino-acid chain; its full sequence is Zymogen granule membrane protein 16 (167 aa).

The N-terminal stretch at 1-16 (MLAVALLVLLCASASA) is a signal peptide. The region spanning 24 to 159 (SSYSGEYGGK…IDSISLHWDT (136 aa)) is the Jacalin-type lectin domain.

The protein belongs to the jacalin lectin family.

Its subcellular location is the secreted. It localises to the extracellular space. The protein resides in the extracellular matrix. The protein localises to the zymogen granule lumen. It is found in the golgi apparatus lumen. Functionally, may play a role in protein trafficking. May act as a linker molecule between the submembranous matrix on the luminal side of zymogen granule membrane (ZGM) and aggregated secretory proteins during granule formation in the TGN. The chain is Zymogen granule membrane protein 16 (Zg16) from Mus musculus (Mouse).